The chain runs to 67 residues: MKLTCVLIAAVLLLAVCQLDSADATGYMRKNPSLRSPKRTRGCKSKGSFCWNGIECCGGNCFFACVY.

The signal sequence occupies residues methionine 1–alanine 24. The propeptide occupies threonine 25–proline 37. Disulfide bonds link cysteine 43–cysteine 57, cysteine 50–cysteine 61, and cysteine 56–cysteine 65.

It belongs to the conotoxin O1 superfamily. Expressed by the venom duct.

It is found in the secreted. The sequence is that of Conotoxin Cl6.6b from Californiconus californicus (California cone).